Here is a 112-residue protein sequence, read N- to C-terminus: Large ribosomal subunit protein bL17 (112 aa).

It belongs to the bacterial ribosomal protein bL17 family. Part of the 50S ribosomal subunit. Contacts protein L32.

The chain is Large ribosomal subunit protein bL17 from Desulforamulus reducens (strain ATCC BAA-1160 / DSM 100696 / MI-1) (Desulfotomaculum reducens).